The following is a 237-amino-acid chain: Aspartate/glutamate leucyltransferase (237 aa).

The protein belongs to the R-transferase family. Bpt subfamily.

Its subcellular location is the cytoplasm. The catalysed reaction is N-terminal L-glutamyl-[protein] + L-leucyl-tRNA(Leu) = N-terminal L-leucyl-L-glutamyl-[protein] + tRNA(Leu) + H(+). It catalyses the reaction N-terminal L-aspartyl-[protein] + L-leucyl-tRNA(Leu) = N-terminal L-leucyl-L-aspartyl-[protein] + tRNA(Leu) + H(+). In terms of biological role, functions in the N-end rule pathway of protein degradation where it conjugates Leu from its aminoacyl-tRNA to the N-termini of proteins containing an N-terminal aspartate or glutamate. This is Aspartate/glutamate leucyltransferase from Shewanella amazonensis (strain ATCC BAA-1098 / SB2B).